We begin with the raw amino-acid sequence, 192 residues long: UPF0149 protein KPN78578_32810 (192 aa).

This sequence belongs to the UPF0149 family.

This is UPF0149 protein KPN78578_32810 from Klebsiella pneumoniae subsp. pneumoniae (strain ATCC 700721 / MGH 78578).